We begin with the raw amino-acid sequence, 170 residues long: MRTLTIEPLTKEAFAPFGDVIETEGSDYFMINNGSTRRYHKLATVETAAPEDQAIISIFAAEALEMPLVIRMLERHPLGSQAFIPLLGHPFLVVVAPLGDAPVPGHVRAFRSNGRQGVNYHRGVWHHPVLTIEKRDEFLVVDRSGSGNNCDEYFFTEDQQLLLDPQQVSR.

Belongs to the ureidoglycolate lyase family. Homodimer. The cofactor is Ni(2+).

It catalyses the reaction (S)-ureidoglycolate = urea + glyoxylate. It participates in nitrogen metabolism; (S)-allantoin degradation. Its function is as follows. Catalyzes the catabolism of the allantoin degradation intermediate (S)-ureidoglycolate, generating urea and glyoxylate. Involved in the utilization of allantoin as nitrogen source. This is Ureidoglycolate lyase from Stutzerimonas stutzeri (strain A1501) (Pseudomonas stutzeri).